The sequence spans 325 residues: Phospholipid phosphatase-related protein type 1 (325 aa).

N-linked (GlcNAc...) asparagine glycosylation occurs at N5. Helical transmembrane passes span 13–33 (IIPCFIFVELVIMAGTVLLAY), 67–87 (FITPLVLYCVLAATPTAIIFI), and 127–147 (FTGVFAFGLFATDIFVNAGQV). A glycan (N-linked (GlcNAc...) asparagine) is linked at N163. Transmembrane regions (helical) follow at residues 201–218 (AALSIYSALYATMYITST), 230–247 (VLCLGTLCTAFLTGLNRV), and 257–277 (VIAGFILGTAVALFLGMCVVH). Position 307 is a phosphoserine (S307). N-linked (GlcNAc...) asparagine glycosylation is present at N316.

Belongs to the PA-phosphatase related phosphoesterase family.

The protein localises to the cell membrane. It localises to the cell projection. The protein resides in the neuron projection. Functionally, may play a role in neurite outgrowth and neurogenesis. This chain is Phospholipid phosphatase-related protein type 1, found in Homo sapiens (Human).